A 1154-amino-acid chain; its full sequence is BEACH domain-containing protein lvsF (1154 aa).

Disordered stretches follow at residues 92 to 123 (HLPT…EQPS) and 139 to 167 (TSKV…PTPT). The span at 145-158 (PTPPTPTPTPPTPQ) shows a compositional bias: pro residues. The 96-residue stretch at 289–384 (DMNERNILEL…TRNQVYDLLV (96 aa)) folds into the BEACH-type PH domain. The BEACH domain occupies 389 to 697 (TNIMHINEQA…QIFKTPHPQR (309 aa)). Disordered stretches follow at residues 554–575 (SFES…NFEN), 739–762 (NNLN…LNNN), and 779–825 (NSLN…ENLN). Low complexity-rich tracts occupy residues 779–788 (NSLNNENNEN) and 795–822 (NSNS…NENE). WD repeat units follow at residues 858 to 897 (LHKD…QIRS), 900 to 939 (LCNL…ISYS), 942 to 980 (GHSD…NGAI), 992 to 1031 (DSDT…LIRR), 1034 to 1074 (CFFD…FSFK), 1076 to 1110 (KGEI…EIKD), and 1119 to 1154 (SSNE…IWQQ).

The protein is BEACH domain-containing protein lvsF (lvsF) of Dictyostelium discoideum (Social amoeba).